The chain runs to 490 residues: tRNA-guanine(15) transglycosylase (490 aa).

The active-site Nucleophile is Asp-90. The substrate site is built by Asp-125 and Ala-193. Positions 276, 278, and 281 each coordinate Zn(2+).

The protein belongs to the archaeosine tRNA-ribosyltransferase family. Requires Zn(2+) as cofactor.

The catalysed reaction is guanosine(15) in tRNA + 7-cyano-7-deazaguanine = 7-cyano-7-carbaguanosine(15) in tRNA + guanine. It participates in tRNA modification; archaeosine-tRNA biosynthesis. Its function is as follows. Exchanges the guanine residue with 7-cyano-7-deazaguanine (preQ0) at position 15 in the dihydrouridine loop (D-loop) of archaeal tRNAs. This chain is tRNA-guanine(15) transglycosylase, found in Methanosarcina mazei (strain ATCC BAA-159 / DSM 3647 / Goe1 / Go1 / JCM 11833 / OCM 88) (Methanosarcina frisia).